The sequence spans 714 residues: BBSome complex member bbs-2 (714 aa).

Coiled-coil stretches lie at residues 332 to 361 (IREF…VEKD) and 597 to 627 (MTEV…DSIA).

In terms of assembly, part of BBSome complex, that contains at least bbs-1, bbs-2, bbs-4, bbs-5, osm-12, bbs-8/ttc-8 and bbs-9. In terms of tissue distribution, expressed in ciliated cells including amphid and both inner and outer labial neurons of the head and in both phasmid neurons PHA and PHB in the tail at larval stages L1 and L2.

It localises to the cell projection. It is found in the cilium. Its subcellular location is the cytoplasm. The protein resides in the cytoskeleton. The protein localises to the cilium basal body. It localises to the cilium axoneme. Functionally, component of the BBSome complex. The BBSome complex is thought to function as a coat complex required for sorting of specific membrane proteins to the primary cilia. The BBSome complex is required for ciliogenesis but is dispensable for centriolar satellite function. Required for proper BBSome complex assembly and its ciliary localization. Required for cilia biogenesis and both the assembly and movement of intraflagellar transport proteins along the ciliary axoneme. This chain is BBSome complex member bbs-2, found in Caenorhabditis elegans.